The chain runs to 308 residues: Ribosomal RNA small subunit methyltransferase H (308 aa).

S-adenosyl-L-methionine is bound by residues 33-35 (GGH), Asp52, Tyr81, Asp99, and Gln106.

Belongs to the methyltransferase superfamily. RsmH family.

It localises to the cytoplasm. It catalyses the reaction cytidine(1402) in 16S rRNA + S-adenosyl-L-methionine = N(4)-methylcytidine(1402) in 16S rRNA + S-adenosyl-L-homocysteine + H(+). In terms of biological role, specifically methylates the N4 position of cytidine in position 1402 (C1402) of 16S rRNA. The sequence is that of Ribosomal RNA small subunit methyltransferase H from Francisella philomiragia subsp. philomiragia (strain ATCC 25017 / CCUG 19701 / FSC 153 / O#319-036).